A 169-amino-acid chain; its full sequence is GTP-dependent dephospho-CoA kinase (169 aa).

The GTP site is built by D45, D64, K66, and E121.

Belongs to the GTP-dependent DPCK family.

It catalyses the reaction 3'-dephospho-CoA + GTP = GDP + CoA + H(+). It functions in the pathway cofactor biosynthesis; coenzyme A biosynthesis. In terms of biological role, catalyzes the GTP-dependent phosphorylation of the 3'-hydroxyl group of dephosphocoenzyme A to form coenzyme A (CoA). The protein is GTP-dependent dephospho-CoA kinase of Methanosphaera stadtmanae (strain ATCC 43021 / DSM 3091 / JCM 11832 / MCB-3).